A 368-amino-acid polypeptide reads, in one-letter code: Probable magnesium transporter (368 aa).

Topologically, residues 1–4 are extracellular; that stretch reads MEDK. Residues 5–25 form a helical membrane-spanning segment; that stretch reads YIGLALAMSSSLAIGTSFIIT. Topologically, residues 26 to 50 are cytoplasmic; the sequence is KKGLMDASARTGGTDGVQASDYLQN. A helical transmembrane segment spans residues 51–71; the sequence is PIWWGGMITMAIGEIANFAAY. At 72-76 the chain is on the extracellular side; it reads TFAPA. A helical transmembrane segment spans residues 77 to 97; the sequence is ILVTPLGALSVIIGAVLAAIF. Residues 98-101 are Cytoplasmic-facing; the sequence is LKER. Residues 102-122 form a helical membrane-spanning segment; it reads LGTLGKMGCAICLMGSVIIIL. Residues 123–143 are Extracellular-facing; sequence HAPPDKEVQTVDEILGYATQP. The chain crosses the membrane as a helical span at residues 144 to 164; it reads GFMFYCTVVTLYSLFMIYKIV. Topologically, residues 165-175 are cytoplasmic; that stretch reads PKYGNTNPMIY. A helical transmembrane segment spans residues 176-196; the sequence is LSICSSVGSISVMSIKAFGIA. The Extracellular segment spans residues 197–206; it reads LKLTLGGNNQ. Residues 207–227 traverse the membrane as a helical segment; that stretch reads FTHVSTYLFLIVVALCIVTQM. Over 228 to 240 the chain is Cytoplasmic; sequence NYFNKALDQFDTS. The chain crosses the membrane as a helical span at residues 241–261; it reads IVNPLYYVTFTTFTLAASFIL. Over 262-269 the chain is Extracellular; it reads FKGFNTSS. Asparagine 266 is a glycosylation site (N-linked (GlcNAc...) asparagine). A helical membrane pass occupies residues 270 to 290; it reads AVDIISLLIGFLIIFSGVYLL. Over 291–368 the chain is Cytoplasmic; that stretch reads NISRSESPMV…GDEDTRNYRH (78 aa).

This sequence belongs to the NIPA family.

It localises to the cell membrane. The protein localises to the early endosome. The catalysed reaction is Mg(2+)(in) = Mg(2+)(out). Functionally, probably acts as a selective Mg(2+) transporter. Plays a role in cell wall integrity and in engulfment by host macrophages. In Candida albicans (strain SC5314 / ATCC MYA-2876) (Yeast), this protein is Probable magnesium transporter.